We begin with the raw amino-acid sequence, 251 residues long: Triosephosphate isomerase (251 aa).

9–11 (NWK) lines the substrate pocket. The active-site Electrophile is H95. E167 acts as the Proton acceptor in catalysis. Substrate contacts are provided by residues G173, S212, and 233–234 (GG).

Belongs to the triosephosphate isomerase family. As to quaternary structure, homodimer.

Its subcellular location is the cytoplasm. It carries out the reaction D-glyceraldehyde 3-phosphate = dihydroxyacetone phosphate. Its pathway is carbohydrate biosynthesis; gluconeogenesis. It functions in the pathway carbohydrate degradation; glycolysis; D-glyceraldehyde 3-phosphate from glycerone phosphate: step 1/1. In terms of biological role, involved in the gluconeogenesis. Catalyzes stereospecifically the conversion of dihydroxyacetone phosphate (DHAP) to D-glyceraldehyde-3-phosphate (G3P). In Pseudomonas aeruginosa (strain LESB58), this protein is Triosephosphate isomerase.